The primary structure comprises 131 residues: Global transcriptional regulator Spx 1 (131 aa).

Cys10 and Cys13 are oxidised to a cystine.

This sequence belongs to the ArsC family. Spx subfamily. In terms of assembly, interacts with the C-terminal domain of the alpha subunit of the RNAP.

It localises to the cytoplasm. Its function is as follows. Global transcriptional regulator that plays a key role in stress response and exerts either positive or negative regulation of genes. Acts by interacting with the C-terminal domain of the alpha subunit of the RNA polymerase (RNAP). This interaction can enhance binding of RNAP to the promoter region of target genes and stimulate their transcription, or block interaction of RNAP with activator. This chain is Global transcriptional regulator Spx 1, found in Oceanobacillus iheyensis (strain DSM 14371 / CIP 107618 / JCM 11309 / KCTC 3954 / HTE831).